The sequence spans 146 residues: Angiogenin (146 aa).

An N-terminal signal peptide occupies residues 1–24; the sequence is MAMSLCPLLLVFVLGLGLTPPSLA. Q25 bears the Pyrrolidone carboxylic acid mark. H37 serves as the catalytic Proton acceptor. Residue R45 coordinates tRNA. 3 disulfides stabilise this stretch: C50/C105, C63/C116, and C81/C131. A Nucleolar localization signal motif is present at residues 55–59; it reads VRRHL. C105 and I127 together coordinate tRNA. H138 acts as the Proton donor in catalysis.

The protein belongs to the pancreatic ribonuclease family. Homodimer. Interacts with RNH1; inhibiting ANG ribonuclease activity. Interacts with PCNA.

Its subcellular location is the secreted. It localises to the nucleus. The protein resides in the nucleolus. It is found in the cytoplasm. The protein localises to the stress granule. With respect to regulation, has weak tRNA ribonuclease activity by itself due to partial autoinhibition by its C-terminus, which folds into a short alpha-helix that partially occludes the substrate-binding site. In absence of stress, the ribonuclease activity is inhibited by RNH1 in the cytoplasm. In response to stress, dissociates from RNH1 in the cytoplasm and associates with cytoplasmic ribosomes with vacant A-sites: ribosomes directly activate the tRNA ribonuclease activity of ANG by refolding the C-terminal alpha-helix. In response to stress, the angiogenic activity of ANG is inhibited by RNH1 in the nucleus. Functionally, secreted ribonuclease that can either promote or restrict cell proliferation of target cells, depending on the context. Endocytosed in target cells via its receptor PLXNB2 and translocates to the cytoplasm or nucleus. Under stress conditions, localizes to the cytoplasm and promotes the assembly of stress granules (SGs): specifically cleaves a subset of tRNAs within anticodon loops to produce tRNA-derived stress-induced fragments (tiRNAs), resulting in translation repression and inhibition of cell proliferation. tiRNas also prevent formation of apoptosome, thereby promoting cell survival. Preferentially cleaves RNAs between a pyrimidine and an adenosine residue, suggesting that it cleaves the anticodon loop of tRNA(Ala) (32-UUAGCAU-38) after positions 33 and 36. Cleaves a subset of tRNAs, including tRNA(Ala), tRNA(Glu), tRNA(Gly), tRNA(Lys), tRNA(Val), tRNA(His), tRNA(Asp) and tRNA(Sec). Under growth conditions and in differentiated cells, translocates to the nucleus and stimulates ribosomal RNA (rRNA) transcription, including that containing the initiation site sequences of 45S rRNA, thereby promoting cell growth and proliferation. Angiogenin induces vascularization of normal and malignant tissues via its ability to promote rRNA transcription. Involved in hematopoietic stem and progenitor cell (HSPC) growth and survival by promoting rRNA transcription in growth conditions and inhibiting translation in response to stress, respectively. Mediates the crosstalk between myeloid and intestinal epithelial cells to protect the intestinal epithelial barrier integrity: secreted by myeloid cells and promotes intestinal epithelial cells proliferation and survival. Also mediates osteoclast-endothelial cell crosstalk in growing bone: produced by osteoclasts and protects the neighboring vascular cells against senescence by promoting rRNA transcription. The polypeptide is Angiogenin (ANG) (Equus caballus (Horse)).